Consider the following 285-residue polypeptide: Shikimate dehydrogenase (NADP(+)) (285 aa).

Shikimate contacts are provided by residues 22–24 (SRS) and Thr-71. The active-site Proton acceptor is the Lys-75. Residues Asn-96 and Asp-111 each contribute to the shikimate site. Residues 136 to 140 (GAGGA), 160 to 165 (NRTVGR), and Ile-225 each bind NADP(+). Residue Tyr-227 coordinates shikimate. Gly-248 serves as a coordination point for NADP(+).

This sequence belongs to the shikimate dehydrogenase family. In terms of assembly, homodimer.

The catalysed reaction is shikimate + NADP(+) = 3-dehydroshikimate + NADPH + H(+). Its pathway is metabolic intermediate biosynthesis; chorismate biosynthesis; chorismate from D-erythrose 4-phosphate and phosphoenolpyruvate: step 4/7. In terms of biological role, involved in the biosynthesis of the chorismate, which leads to the biosynthesis of aromatic amino acids. Catalyzes the reversible NADPH linked reduction of 3-dehydroshikimate (DHSA) to yield shikimate (SA). This chain is Shikimate dehydrogenase (NADP(+)), found in Rhizobium etli (strain CIAT 652).